We begin with the raw amino-acid sequence, 206 residues long: Ribosomal RNA large subunit methyltransferase E (206 aa).

Residues Gly-60, Trp-62, Asp-80, Asp-96, and Asp-121 each contribute to the S-adenosyl-L-methionine site. The active-site Proton acceptor is Lys-161.

The protein belongs to the class I-like SAM-binding methyltransferase superfamily. RNA methyltransferase RlmE family.

It localises to the cytoplasm. The enzyme catalyses uridine(2552) in 23S rRNA + S-adenosyl-L-methionine = 2'-O-methyluridine(2552) in 23S rRNA + S-adenosyl-L-homocysteine + H(+). Specifically methylates the uridine in position 2552 of 23S rRNA at the 2'-O position of the ribose in the fully assembled 50S ribosomal subunit. In Hahella chejuensis (strain KCTC 2396), this protein is Ribosomal RNA large subunit methyltransferase E.